Consider the following 248-residue polypeptide: Granulin (248 aa).

It belongs to the polyhedrin family.

Component of the virus occlusion bodies, which are large proteinaceous structures, that protect the virus from the outside environment for extended periods until they are ingested by insect larvae. This Cydia pomonella (Codling moth) protein is Granulin.